Consider the following 128-residue polypeptide: MAYRKLGRTSSQRKAMLRDLTTDLLINESIVTTEARAKEIRKTVEKMITLGKRGDLHARRQAAAYVRNEIASENYDEAADKYTSTTALQKLFSEIAPRYAERNGGYTRILKTEPRRGDAAPMAIIELV.

The protein belongs to the bacterial ribosomal protein bL17 family. As to quaternary structure, part of the 50S ribosomal subunit. Contacts protein L32.

This Streptococcus pyogenes serotype M49 (strain NZ131) protein is Large ribosomal subunit protein bL17.